The chain runs to 124 residues: S-adenosylmethionine decarboxylase proenzyme (124 aa).

S63 functions as the Schiff-base intermediate with substrate; via pyruvic acid in the catalytic mechanism. The residue at position 63 (S63) is a Pyruvic acid (Ser); by autocatalysis. The active-site Proton acceptor; for processing activity is the H68. C83 serves as the catalytic Proton donor; for catalytic activity.

The protein belongs to the prokaryotic AdoMetDC family. Type 1 subfamily. Heterotetramer of two alpha and two beta chains arranged as a dimer of alpha/beta heterodimers. It depends on pyruvate as a cofactor. In terms of processing, is synthesized initially as an inactive proenzyme. Formation of the active enzyme involves a self-maturation process in which the active site pyruvoyl group is generated from an internal serine residue via an autocatalytic post-translational modification. Two non-identical subunits are generated from the proenzyme in this reaction, and the pyruvate is formed at the N-terminus of the alpha chain, which is derived from the carboxyl end of the proenzyme. The post-translation cleavage follows an unusual pathway, termed non-hydrolytic serinolysis, in which the side chain hydroxyl group of the serine supplies its oxygen atom to form the C-terminus of the beta chain, while the remainder of the serine residue undergoes an oxidative deamination to produce ammonia and the pyruvoyl group blocking the N-terminus of the alpha chain.

It carries out the reaction S-adenosyl-L-methionine + H(+) = S-adenosyl 3-(methylsulfanyl)propylamine + CO2. It participates in amine and polyamine biosynthesis; S-adenosylmethioninamine biosynthesis; S-adenosylmethioninamine from S-adenosyl-L-methionine: step 1/1. Functionally, catalyzes the decarboxylation of S-adenosylmethionine to S-adenosylmethioninamine (dcAdoMet), the propylamine donor required for the synthesis of the polyamines spermine and spermidine from the diamine putrescine. In Acetivibrio thermocellus (strain ATCC 27405 / DSM 1237 / JCM 9322 / NBRC 103400 / NCIMB 10682 / NRRL B-4536 / VPI 7372) (Clostridium thermocellum), this protein is S-adenosylmethionine decarboxylase proenzyme.